Reading from the N-terminus, the 156-residue chain is SsrA-binding protein (156 aa).

Belongs to the SmpB family.

The protein localises to the cytoplasm. Functionally, required for rescue of stalled ribosomes mediated by trans-translation. Binds to transfer-messenger RNA (tmRNA), required for stable association of tmRNA with ribosomes. tmRNA and SmpB together mimic tRNA shape, replacing the anticodon stem-loop with SmpB. tmRNA is encoded by the ssrA gene; the 2 termini fold to resemble tRNA(Ala) and it encodes a 'tag peptide', a short internal open reading frame. During trans-translation Ala-aminoacylated tmRNA acts like a tRNA, entering the A-site of stalled ribosomes, displacing the stalled mRNA. The ribosome then switches to translate the ORF on the tmRNA; the nascent peptide is terminated with the 'tag peptide' encoded by the tmRNA and targeted for degradation. The ribosome is freed to recommence translation, which seems to be the essential function of trans-translation. The chain is SsrA-binding protein from Clostridium beijerinckii (strain ATCC 51743 / NCIMB 8052) (Clostridium acetobutylicum).